The chain runs to 256 residues: Trans-aconitate 2-methyltransferase (256 aa).

Belongs to the methyltransferase superfamily. Tam family.

It localises to the cytoplasm. It catalyses the reaction trans-aconitate + S-adenosyl-L-methionine = (E)-3-(methoxycarbonyl)pent-2-enedioate + S-adenosyl-L-homocysteine. Its function is as follows. Catalyzes the S-adenosylmethionine monomethyl esterification of trans-aconitate. The protein is Trans-aconitate 2-methyltransferase of Afipia carboxidovorans (strain ATCC 49405 / DSM 1227 / KCTC 32145 / OM5) (Oligotropha carboxidovorans).